Consider the following 707-residue polypeptide: ATP-dependent RNA helicase DHX33 (707 aa).

The segment at 1 to 64 is disordered; it reads MPEEAGFPPA…LAQPSASPYP (64 aa). Residues 1 to 80 are required for nucleolar location; it reads MPEEAGFPPA…RRSLPIFQAR (80 aa). Residues 39-49 show a composition bias toward gly residues; it reads GSGGRGGGGGR. Positions 50 to 64 are enriched in low complexity; sequence RQQPPLAQPSASPYP. One can recognise a Helicase ATP-binding domain in the interval 84-252; that stretch reads LAQLRNLDNA…FNGAPVLYLE (169 aa). 97–104 serves as a coordination point for ATP; the sequence is GETGSGKT. Positions 194 to 197 match the DEAH box motif; the sequence is DEAH. The 174-residue stretch at 277–450 folds into the Helicase C-terminal domain; sequence SVFQIHQEAP…SVMLQLLAMK (174 aa). The interval 471 to 562 is HA2; required for interaction with EIF3G and RPL26; that stretch reads AIAQLDLLGA…ISSEGDHMTL (92 aa). The Critical for rDNA-binding signature appears at 547 to 558; it reads GVRKKFISSEGD.

Belongs to the DEAD box helicase family. DEAH subfamily. Interacts with UBTF. Interacts with DDX3X, EIF3G and EIF3H; the interaction is independent of RNA. Interacts (via HA2 region and Helicase C-terminal domain) with the components of the large ribosomal subunit RPL3, RPL7, RPL26 and RPL27. Interacts (via DEAH box) with NLRP3 (via NACHT domain). Binds to mRNA. Binds to double-stranded RNA (via the helicase C-terminal domain). Interacts (via the helicase C-terminal domain) with MAVS. In terms of processing, ubiquitinated, leading to its degradation by the proteasome. Deubiquitinated by USP36.

The protein localises to the nucleus. The protein resides in the nucleolus. It localises to the nucleoplasm. It is found in the cytoplasm. Its subcellular location is the inflammasome. The catalysed reaction is ATP + H2O = ADP + phosphate + H(+). In terms of biological role, implicated in nucleolar organization, ribosome biogenesis, protein synthesis and cytoplasmic dsRNA sensing. Stimulates RNA polymerase I transcription of the 47S precursor rRNA. Associates with ribosomal DNA (rDNA) loci where it is involved in POLR1A recruitment. In the cytoplasm, promotes elongation-competent 80S ribosome assembly at the late stage of mRNA translation initiation. Senses cytosolic dsRNA mediating NLRP3 inflammasome formation in macrophages and type I interferon production in myeloid dendritic cells. Required for NLRP3 activation induced by viral dsRNA and bacterial RNA. In dendritic cells, required for induction of type I interferon production induced by cytoplasmic dsRNA via the activation of MAPK and NF-kappa-B signaling pathways. The protein is ATP-dependent RNA helicase DHX33 of Homo sapiens (Human).